The chain runs to 396 residues: Glutamyl-tRNA reductase (396 aa).

Residues Thr-45–Arg-48, Ser-101, Glu-106–Gln-108, and Gln-112 contribute to the substrate site. Cys-46 acts as the Nucleophile in catalysis. NADP(+) is bound at residue Gly-177–Gly-182.

The protein belongs to the glutamyl-tRNA reductase family. In terms of assembly, homodimer.

It carries out the reaction (S)-4-amino-5-oxopentanoate + tRNA(Glu) + NADP(+) = L-glutamyl-tRNA(Glu) + NADPH + H(+). It participates in porphyrin-containing compound metabolism; protoporphyrin-IX biosynthesis; 5-aminolevulinate from L-glutamyl-tRNA(Glu): step 1/2. Its function is as follows. Catalyzes the NADPH-dependent reduction of glutamyl-tRNA(Glu) to glutamate 1-semialdehyde (GSA). This is Glutamyl-tRNA reductase from Clostridium acetobutylicum (strain ATCC 824 / DSM 792 / JCM 1419 / IAM 19013 / LMG 5710 / NBRC 13948 / NRRL B-527 / VKM B-1787 / 2291 / W).